The sequence spans 707 residues: Mitochondrial disaggregase (707 aa).

Residues 1–36 (MLGSLVLRRKALAPRLLLRLLRSPTLRGHGGASGRN) constitute a mitochondrion transit peptide. The segment at 92-126 (PGPEETLPGQDSWNGVPSRAGLGMCALAAALVVHC) is autoinhibitory. 4 ANK repeats span residues 133–162 (NKDAALLEAARANNMQEVSRLLSEGADVNA), 166–195 (LGWTALMVAAINRNNSVVQVLLAAGADPNL), 265–295 (KGCTALHYAVLADDYRTVKELLDGGANPLQR), and 298–327 (MGHTPLDYAREGEVMKLLRTSEAKYQEKQR). Residues His-346, Ile-348, Ser-383, Gly-384, Ile-385, Gly-386, Lys-387, Thr-388, Glu-455, and Asn-496 each coordinate ATP. Residues 507-535 (LQLRQEALEMSRNRIAENLGDVQISDKIT) are regulatory; slows ATPase and disaggregase activities. Arg-561 contributes to the ATP binding site. Lys-589 bears the N6-acetyllysine mark. Arg-620 contacts ATP.

This sequence belongs to the ClpA/ClpB family. As to quaternary structure, homododecamer when substrate-bound; the homododecamer consists of 2 homohexamers stacked head-to-head via ANK repeat-mediated interactions. The active substrate-bound form is likely to exist in a dynamic equilibrium between homohexamers and homododecamers. Homotetradecamer in the unbound state which is remodeled upon substrate binding into the homododecamer. Interacts with PHB and PHB2. Interacts with MAVS; the interaction is enhanced by Sendai virus infection. Post-translationally, proteolytically cleaved by protease PARL. ATP-dependent protein disaggregase activity is stimulated by PARL-mediated cleavage of the N-terminal autoinhibitory peptide. In terms of tissue distribution, widely expressed (at protein level). Expressed in fetal, as well as in adult tissues, with highest levels in adult brain, including thalamus, hippocampus, occipital cortex and parietal cortex. Low expression in granulocytes.

It localises to the mitochondrion intermembrane space. It carries out the reaction ATP + H2O = ADP + phosphate + H(+). Disaggregase activity is inhibited by ADP. In terms of biological role, functions as a regulatory ATPase and participates in secretion/protein trafficking process. Has ATP-dependent protein disaggregase activity and is required to maintain the solubility of key mitochondrial proteins. Involved in mitochondrial-mediated antiviral innate immunity, activates RIG-I-mediated signal transduction and production of IFNB1 and pro-inflammatory cytokine IL6. Plays a role in granulocyte differentiation. The chain is Mitochondrial disaggregase from Homo sapiens (Human).